The following is a 281-amino-acid chain: Pantothenate synthetase (281 aa).

30-37 provides a ligand contact to ATP; it reads MGYLHEGH. The active-site Proton donor is His-37. Gln-61 contacts (R)-pantoate. Residue Gln-61 participates in beta-alanine binding. 147-150 is a binding site for ATP; that stretch reads GEKD. Residue Gln-153 participates in (R)-pantoate binding. ATP contacts are provided by residues Ile-176 and 184 to 187; that span reads KSSR.

Belongs to the pantothenate synthetase family. Homodimer.

The protein localises to the cytoplasm. The catalysed reaction is (R)-pantoate + beta-alanine + ATP = (R)-pantothenate + AMP + diphosphate + H(+). Its pathway is cofactor biosynthesis; (R)-pantothenate biosynthesis; (R)-pantothenate from (R)-pantoate and beta-alanine: step 1/1. Its function is as follows. Catalyzes the condensation of pantoate with beta-alanine in an ATP-dependent reaction via a pantoyl-adenylate intermediate. In Clostridium botulinum (strain Loch Maree / Type A3), this protein is Pantothenate synthetase.